Consider the following 499-residue polypeptide: Thioredoxin reductase 1, cytoplasmic (499 aa).

Residues 22–23 (SG), 42–43 (DF), 58–59 (TC), and 63–67 (SCIPK) each bind FAD. An intrachain disulfide couples Cys-59 to Cys-64. An N6-succinyllysine modification is found at Lys-68. Residue Tyr-131 is modified to Phosphotyrosine. Residues 131–132 (YG) and Thr-161 each bind FAD. NADP(+) is bound by residues Arg-166, 198 to 204 (ASYVALE), 221 to 222 (RS), Arg-226, 226 to 228 (RGF), 292 to 293 (GR), and Lys-315. Residue Tyr-200 coordinates FAD. Residues Asp-334, 341 to 343 (ELT), and His-472 each bind FAD. Glu-341 serves as a coordination point for NADP(+). The Proton acceptor role is filled by His-472. The cysteinyl-selenocysteine (Cys-Sec) cross-link spans 497–498 (CU). A non-standard amino acid (selenocysteine) is located at residue Sec-498.

The protein belongs to the class-I pyridine nucleotide-disulfide oxidoreductase family. Homodimer. The cofactor is FAD. ISGylated.

It localises to the cytoplasm. The enzyme catalyses [thioredoxin]-dithiol + NADP(+) = [thioredoxin]-disulfide + NADPH + H(+). The catalysed reaction is H2O2 + NADPH + H(+) = NADP(+) + 2 H2O. Reduces disulfideprotein thioredoxin (Trx) to its dithiol-containing form. Homodimeric flavoprotein involved in the regulation of cellular redox reactions, growth and differentiation. Contains a selenocysteine residue at the C-terminal active site that is essential for catalysis. Also has reductase activity on hydrogen peroxide (H2O2). The chain is Thioredoxin reductase 1, cytoplasmic (TXNRD1) from Sus scrofa (Pig).